The primary structure comprises 365 residues: Protein-glutamate methylesterase/protein-glutamine glutaminase 2 (365 aa).

In terms of domain architecture, Response regulatory spans 6–123 (RVLIIDDSAS…ADSLSDDAMR (118 aa)). Asp57 is subject to 4-aspartylphosphate. The 187-residue stretch at 173 to 359 (AKTTEMVVCV…PLDQIAREVL (187 aa)) folds into the CheB-type methylesterase domain. Active-site residues include Ser185, His211, and Asp307.

It belongs to the CheB family. Post-translationally, phosphorylated by CheA. Phosphorylation of the N-terminal regulatory domain activates the methylesterase activity.

The protein resides in the cytoplasm. It carries out the reaction [protein]-L-glutamate 5-O-methyl ester + H2O = L-glutamyl-[protein] + methanol + H(+). The enzyme catalyses L-glutaminyl-[protein] + H2O = L-glutamyl-[protein] + NH4(+). Functionally, involved in chemotaxis. Part of a chemotaxis signal transduction system that modulates chemotaxis in response to various stimuli. Catalyzes the demethylation of specific methylglutamate residues introduced into the chemoreceptors (methyl-accepting chemotaxis proteins or MCP) by CheR. Also mediates the irreversible deamidation of specific glutamine residues to glutamic acid. The chain is Protein-glutamate methylesterase/protein-glutamine glutaminase 2 from Rhizobium johnstonii (strain DSM 114642 / LMG 32736 / 3841) (Rhizobium leguminosarum bv. viciae).